A 132-amino-acid chain; its full sequence is EF-hand calcium-binding domain-containing protein 10 (132 aa).

2 EF-hand domains span residues methionine 64 to cysteine 99 and glutamate 120 to phenylalanine 132.

The chain is EF-hand calcium-binding domain-containing protein 10 (Efcab10) from Mus musculus (Mouse).